We begin with the raw amino-acid sequence, 603 residues long: Polypeptide N-acetylgalactosaminyltransferase 10 (603 aa).

Topologically, residues Met1–Ala11 are cytoplasmic. A helical; Signal-anchor for type II membrane protein transmembrane segment spans residues Val12–Tyr31. At Arg32 to Asn603 the chain is on the lumenal side. N-linked (GlcNAc...) asparagine glycosylation is found at Asn124 and Asn146. 5 cysteine pairs are disulfide-bonded: Cys135–Cys365, Cys356–Cys432, Cys471–Cys488, Cys523–Cys538, and Cys563–Cys578. The catalytic subdomain A stretch occupies residues Leu144 to Arg253. 2 residues coordinate substrate: Asp185 and Arg214. Mn(2+) is bound at residue Asp237. Ser238 lines the substrate pocket. His239 provides a ligand contact to Mn(2+). Residues Pro311–Arg373 form a catalytic subdomain B region. Substrate is bound at residue Trp342. Residue His370 coordinates Mn(2+). Residues Arg373 and Tyr378 each coordinate substrate. The tract at residues Arg373 to Val384 is flexible loop. The Ricin B-type lectin domain maps to Ala458 to Glu590. Asn593 carries N-linked (GlcNAc...) asparagine glycosylation.

This sequence belongs to the glycosyltransferase 2 family. GalNAc-T subfamily. Requires Mn(2+) as cofactor. In terms of tissue distribution, highly expressed in the sublingual gland, testis, small intestine, colon and ovary. Expressed at intermediate level in heart, brain, spleen, lung, stomach, cervix and uterus.

The protein localises to the golgi apparatus membrane. It catalyses the reaction L-seryl-[protein] + UDP-N-acetyl-alpha-D-galactosamine = a 3-O-[N-acetyl-alpha-D-galactosaminyl]-L-seryl-[protein] + UDP + H(+). The enzyme catalyses L-threonyl-[protein] + UDP-N-acetyl-alpha-D-galactosamine = a 3-O-[N-acetyl-alpha-D-galactosaminyl]-L-threonyl-[protein] + UDP + H(+). It participates in protein modification; protein glycosylation. Functionally, catalyzes the initial reaction in O-linked oligosaccharide biosynthesis, the transfer of an N-acetyl-D-galactosamine residue to a serine or threonine residue on the protein receptor. Has activity toward Muc5Ac and EA2 peptide substrates. This chain is Polypeptide N-acetylgalactosaminyltransferase 10 (Galnt10), found in Rattus norvegicus (Rat).